We begin with the raw amino-acid sequence, 504 residues long: Pre-mRNA-processing factor 19 (504 aa).

Serine 2 is modified (N-acetylserine). In terms of domain architecture, U-box spans 2 to 73; it reads SLICSISNEV…KPPSATSIPA (72 aa). Residues 68-223 are may mediate interaction with PSMC5; the sequence is ATSIPAILKA…VGLHSASIPG (156 aa). N6-acetyllysine is present on residues lysine 122, lysine 179, lysine 244, and lysine 261. The stretch at 219-259 is one WD 1 repeat; sequence ASIPGILALDLCPSDTNKILTGGADKNVVVFDKSTEQILAT. 6 WD repeats span residues 262 to 301, 304 to 345, 348 to 387, 390 to 429, 433 to 472, and 473 to 503; these read GHTK…CVQV, AHES…TKVT, TSGC…NVAN, GHSG…NFKT, DNNF…LHFT, and EHSG…KFYS.

This sequence belongs to the WD repeat PRP19 family. As to quaternary structure, homotetramer. Component of activated, catalytic and post-catalytic spliceosomes. Component of the Prp19 complex/PRP19C/Nineteen complex/NTC and related complexes described as PRP19-CDC5L splicing complex and PSO4 complex. A homotetramer of PRPF19, CDC5L, PLRG1 and BCAS2 constitute the core of those complexes. The interaction with CDC5L, PLRG1 and BCAS2 is direct within this core complex. At least three less stably associated proteins CTNNBL1, CWC15 and HSPA8 are found in the Prp19 complex. The Prp19 complex associates with the spliceosome during its assembly and remodeling recruiting additional proteins. Component of the XAB2 complex, a multimeric protein complex composed of XAB2, PRPF19, AQR, ZNF830, ISY1, and PPIE. Interacts with CWC22 and EIF4A3 in an RNA-independent manner. Interacts with RPA1 and RPA2; the PRP19-CDC5L complex is recruited to the sites of DNA repair where it interacts with the replication protein A complex (RPA). Interacts with SETMAR; required for SETMAR recruitment to site of DNA damage. Interacts with U2AF2; the interaction is direct and recruits the Prp19 complex to RNA polymerase II C-terminal domain (CTD) and the pre-mRNA. Interacts with PRPF3. Interacts with APEX1, DNTT and PSMB4. Interacts with KNSTRN. Interacts with PSMC5. Isoform 2 (via N-terminus) interacts with PPIA. Isoform 2 does not interact with CDC5L. Interacts with KHDC4. Interacts with USB1. Interacts with DDX41. In terms of tissue distribution, expressed in white and brown adipose tissues, brain and to a lower extent in liver, kidney, muscle, lung and spleen (at protein level).

It is found in the nucleus. The protein resides in the nucleoplasm. Its subcellular location is the cytoplasm. The protein localises to the cytoskeleton. It localises to the spindle. It is found in the lipid droplet. The catalysed reaction is S-ubiquitinyl-[E2 ubiquitin-conjugating enzyme]-L-cysteine + [acceptor protein]-L-lysine = [E2 ubiquitin-conjugating enzyme]-L-cysteine + N(6)-ubiquitinyl-[acceptor protein]-L-lysine.. It functions in the pathway protein modification; protein ubiquitination. In terms of biological role, ubiquitin-protein ligase which is a core component of several complexes mainly involved in pre-mRNA splicing and DNA repair. Required for pre-mRNA splicing as component of the spliceosome. Core component of the PRP19C/Prp19 complex/NTC/Nineteen complex which is part of the spliceosome and participates in its assembly, its remodeling and is required for its activity. During assembly of the spliceosome, mediates 'Lys-63'-linked polyubiquitination of the U4 spliceosomal protein PRPF3. Ubiquitination of PRPF3 allows its recognition by the U5 component PRPF8 and stabilizes the U4/U5/U6 tri-snRNP spliceosomal complex. Recruited to RNA polymerase II C-terminal domain (CTD) and the pre-mRNA, it may also couple the transcriptional and spliceosomal machineries. The XAB2 complex, which contains PRPF19, is also involved in pre-mRNA splicing, transcription and transcription-coupled repair. Beside its role in pre-mRNA splicing PRPF19, as part of the PRP19-CDC5L complex, plays a role in the DNA damage response/DDR. It is recruited to the sites of DNA damage by the RPA complex where PRPF19 directly ubiquitinates RPA1 and RPA2. 'Lys-63'-linked polyubiquitination of the RPA complex allows the recruitment of the ATR-ATRIP complex and the activation of ATR, a master regulator of the DNA damage response. May also play a role in DNA double-strand break (DSB) repair by recruiting the repair factor SETMAR to altered DNA. As part of the PSO4 complex may also be involved in the DNA interstrand cross-links/ICLs repair process. In addition, may also mediate 'Lys-48'-linked polyubiquitination of substrates and play a role in proteasomal degradation. May play a role in the biogenesis of lipid droplets. May play a role in neural differentiation possibly through its function as part of the spliceosome. Functionally, forced expression leads to suppression of neuronal differentiation, and on the contrary to stimulation of astroglial cell differentiation in retinoic acid-primed P19 cells. The chain is Pre-mRNA-processing factor 19 from Mus musculus (Mouse).